An 809-amino-acid chain; its full sequence is Origin of replication complex subunit 1A (809 aa).

Low complexity predominate over residues 1–47 (MASSLSSKAKTFKSPTKTPTKMYRKSYLSPSSTSLTPPQTPETLTPL). The segment at 1–69 (MASSLSSKAK…LGNDPIDLPG (69 aa)) is disordered. A histone H3 binding region spans residues 160 to 185 (DPEIEDCQICFKSHTNTIMIECDDCL). Residues 163–213 (IEDCQICFKSHTNTIMIECDDCLGGFHLNCLKPPLKEVPEGDWICQFCEVK) form a PHD-type zinc finger. Residues Cys166, Cys169, Cys181, Cys184, His189, and Cys192 each coordinate Zn(2+). The tract at residues 201-205 (PEGDW) is histone H3 binding. 2 residues coordinate Zn(2+): Cys207 and Cys210. The BAH domain maps to 223-341 (PKPPEGKKLA…VHWGSFKRVA (119 aa)). Residues 316 to 321 (ASNDGD) form a histone H3 binding region. A necessary and sufficient for ORC complex assembly region spans residues 431-799 (PKSLPCRSKE…DDVAFALKDN (369 aa)). ATP contacts are provided by residues 466-473 (GVPGTGKT) and 466-474 (GVPGTGKTI). Mg(2+) contacts are provided by Asp556 and Glu557. ATP is bound by residues Glu557, Asn590, and Arg655.

This sequence belongs to the ORC1 family. Component of the origin recognition complex (ORC) composed of at least ORC1 (ORC1A or ORC1B), ORC2, ORC3, ORC4, ORC5 and ORC6. ORC is regulated in a cell-cycle and development dependent manner. It is sequentially assembled at the exit from anaphase of mitosis and disassembled as cells enter S phase. Interacts directly with ORC2, ORC3, ORC4 and ORC5. Binds mostly unmodified histone H3, and, with lower efficiency, H3K4me1 H3K4me2 and H3K4me3. As to expression, follow a cell-cycle regulation with a peak at the G1/S-phase. Mostly expressed in siliques, flowers and flower buds, and, to a lower extent, in roots, leaves and stems.

The protein localises to the nucleus. Its function is as follows. Essential protein. Component of the origin recognition complex (ORC) that binds origins of replication. It has a role in both chromosomal replication and mating type transcriptional silencing. Binds to the ARS consensus sequence (ACS) of origins of replication. H3K4me3 effector that positively regulates the transcription of a subset of genes. This Arabidopsis thaliana (Mouse-ear cress) protein is Origin of replication complex subunit 1A.